The chain runs to 844 residues: Beta-mannosidase B (844 aa).

Catalysis depends on glutamate 432, which acts as the Proton donor. The N-linked (GlcNAc...) asparagine glycan is linked to asparagine 723.

This sequence belongs to the glycosyl hydrolase 2 family. Beta-mannosidase B subfamily.

The enzyme catalyses Hydrolysis of terminal, non-reducing beta-D-mannose residues in beta-D-mannosides.. The protein operates within glycan metabolism; N-glycan degradation. Exoglycosidase that cleaves the single beta-linked mannose residue from the non-reducing end of beta-mannosidic oligosaccharides of various complexity and length. Prefers mannobiose over mannotriose and has no activity against polymeric mannan. Is also severely restricted by galactosyl substitutions at the +1 subsite. The polypeptide is Beta-mannosidase B (mndB) (Aspergillus flavus (strain ATCC 200026 / FGSC A1120 / IAM 13836 / NRRL 3357 / JCM 12722 / SRRC 167)).